The sequence spans 531 residues: GPI alpha-1,2-mannosyltransferase 3 (531 aa).

N-linked (GlcNAc...) asparagine glycosylation is present at asparagine 84. Helical transmembrane passes span 99 to 119, 124 to 144, and 174 to 196; these read GLRG…LYLL, VWFL…IADV, and YCAT…LYYY. Asparagine 204 carries an N-linked (GlcNAc...) asparagine glycan. The next 6 helical transmembrane spans lie at 210-230, 249-269, 303-323, 328-348, 350-370, and 375-395; these read LICV…WIPL, YLPI…IFFG, GVPV…MVTP, ILLV…HKEF, FIYP…SNLK, and AAVG…GLIH. N-linked (GlcNAc...) asparagine glycans are attached at residues asparagine 414 and asparagine 476.

It belongs to the glycosyltransferase 22 family. PIGB subfamily.

The protein resides in the endoplasmic reticulum membrane. The protein operates within glycolipid biosynthesis; glycosylphosphatidylinositol-anchor biosynthesis. In terms of biological role, alpha-1,2-mannosyltransferase that catalyzes the transfer of the third mannose, via an alpha-1,2 bond, from a dolichol-phosphate-mannose (Dol-P-Man) to an alpha-D-Man-(1-&gt;6)-2-PEtn-alpha-D-Man-(1-&gt;4)-alpha-D-GlcN-(1-&gt;6)-(1-radyl,2-acyl-sn-glycero-3-phospho)-2-acyl-inositol intermediate to generate an alpha-D-Man-(1-&gt;2)-alpha-D-Man-(1-&gt;6)-2-PEtn-alpha-D-Man-(1-&gt;4)-alpha-D-GlcN-(1-&gt;6)-(1-radyl,2-acyl-sn-glycero-3-phospho)-2-acyl-inositol (also termed H6) and participates in the nineth step of the glycosylphosphatidylinositol-anchor biosynthesis. May also add the third mannose to an alpha-D-Man-(1-&gt;6)-alpha-D-Man-(1-&gt;4)-alpha-D-GlcN-(1-&gt;6)-(1-radyl,2-acyl-sn-glycero-3-phospho)-2-acyl-inositol (also termed H3) intermediate generating an alpha-D-Man-(1-&gt;2)-alpha-D-Man-(1-&gt;6)-alpha-D-Man-(1-&gt;4)-alpha-D-GlcN-(1-&gt;6)-(1-radyl,2-acyl-sn-glycero-3-phospho)-2-acyl-inositol (also termed H4). The polypeptide is GPI alpha-1,2-mannosyltransferase 3 (Xenopus laevis (African clawed frog)).